The following is a 396-amino-acid chain: Probable sugar efflux transporter (396 aa).

The next 12 membrane-spanning stretches (helical) occupy residues 15-35 (VVTL…PVGL), 50-70 (VGIM…PFML), 81-101 (LICL…AWNF), 103-123 (VLVI…SITA), 136-156 (AQAL…GLPI), 169-189 (TFFA…KLLP), 209-229 (PALM…YTAY), 246-266 (FATV…LVFG), 275-295 (SLVS…LPAA), 301-321 (LAIL…GMQV), 333-353 (VAMA…ALVG), and 364-384 (AIGY…VLIF).

This sequence belongs to the major facilitator superfamily. SotB (TC 2.A.1.2) family.

It localises to the cell inner membrane. Functionally, involved in the efflux of sugars. The physiological role may be the reduction of the intracellular concentration of toxic sugars or sugar metabolites. This chain is Probable sugar efflux transporter, found in Salmonella paratyphi C (strain RKS4594).